The chain runs to 462 residues: O-methyltransferase CTB2 (462 aa).

Residue D289 participates in S-adenosyl-L-methionine binding. The Proton acceptor role is filled by H340.

The protein belongs to the class I-like SAM-binding methyltransferase superfamily. Cation-independent O-methyltransferase family. COMT subfamily.

It participates in mycotoxin biosynthesis. O-methyltransferase; part of the gene cluster that mediates the biosynthesis of cercosporin, a light-activated, non-host-selective toxin. The perylenequinone chromophore of cercosporin absorbs light energy to attain an electronically-activated triplet state and produces active oxygen species such as the hydroxyl radical, superoxide, hydrogen peroxide or singlet oxygen upon reaction with oxygen molecules. These reactive oxygen species cause damage to various cellular components including lipids, proteins and nucleic acids. The first step of cercosporin biosynthesis is performed by the polyketide synthase CTB1 which catalyzes the formation of nor-toralactone. The starter unit acyltransferase (SAT) domain of CTB1 initiates polyketide extension by the selective utilization of acetyl-CoA, which is elongated to the heptaketide in the beta-ketoacyl synthase (KS) domain by successive condensations with six malonyl units introduced by the malonyl acyltransferase (MAT) domain. The product template (PT) domain catalyzes C4-C9 and C2-C11 aldol cyclizations and dehydrations to a trihydroxynaphthalene, which is thought to be delivered to the thioesterase (TE) domain for product release. The bifunctional enzyme CTB3 then methylates nor-toralactone to toralactone before conducting an unusual oxidative aromatic ring opening. The O-methyltransferase CTB2 further methylates the nascent OH-6 of the CBT3 product, blocking further oxidation at this site before the reductase CTB6 reduces the 2-oxopropyl ketone at position C7, giving naphthalene. The FAD-dependent monooxygenase CTB5 in concert with the multicopper oxidase CTB12 are responsible for homodimerization of naphthalene with CTB7 installing the dioxepine moiety, finally producing cercosporin. The fasciclin domain-containing protein CTB11 might act with CTB5 and CTB12 whereas the roles of CTB9 and CTB10 have still to be elucidated. This Cercospora beticola (Sugarbeet leaf spot fungus) protein is O-methyltransferase CTB2.